Here is a 90-residue protein sequence, read N- to C-terminus: Small ribosomal subunit protein bS20 (90 aa).

Residues 1–15 (MANHKSAQKRIRQTK) show a composition bias toward basic residues. The segment at 1–22 (MANHKSAQKRIRQTKTRTERNR) is disordered.

The protein belongs to the bacterial ribosomal protein bS20 family.

In terms of biological role, binds directly to 16S ribosomal RNA. In Helicobacter hepaticus (strain ATCC 51449 / 3B1), this protein is Small ribosomal subunit protein bS20.